Reading from the N-terminus, the 197-residue chain is Pyridoxal 5'-phosphate synthase subunit PdxT (197 aa).

50-52 contributes to the L-glutamine binding site; it reads GES. Residue Cys-82 is the Nucleophile of the active site. L-glutamine is bound by residues Arg-111 and 140 to 141; that span reads IR. Residues His-176 and Glu-178 each act as charge relay system in the active site.

Belongs to the glutaminase PdxT/SNO family. In the presence of PdxS, forms a dodecamer of heterodimers. Only shows activity in the heterodimer.

It catalyses the reaction aldehydo-D-ribose 5-phosphate + D-glyceraldehyde 3-phosphate + L-glutamine = pyridoxal 5'-phosphate + L-glutamate + phosphate + 3 H2O + H(+). It carries out the reaction L-glutamine + H2O = L-glutamate + NH4(+). Its pathway is cofactor biosynthesis; pyridoxal 5'-phosphate biosynthesis. Functionally, catalyzes the hydrolysis of glutamine to glutamate and ammonia as part of the biosynthesis of pyridoxal 5'-phosphate. The resulting ammonia molecule is channeled to the active site of PdxS. The protein is Pyridoxal 5'-phosphate synthase subunit PdxT of Streptomyces griseus subsp. griseus (strain JCM 4626 / CBS 651.72 / NBRC 13350 / KCC S-0626 / ISP 5235).